Reading from the N-terminus, the 247-residue chain is Small ribosomal subunit protein uS2 (247 aa).

This sequence belongs to the universal ribosomal protein uS2 family.

The chain is Small ribosomal subunit protein uS2 from Cupriavidus taiwanensis (strain DSM 17343 / BCRC 17206 / CCUG 44338 / CIP 107171 / LMG 19424 / R1) (Ralstonia taiwanensis (strain LMG 19424)).